A 334-amino-acid chain; its full sequence is Ornithine carbamoyltransferase (334 aa).

Residues 57–60, Q84, R108, and 135–138 contribute to the carbamoyl phosphate site; these read STRT and HPTQ. Residues N169, D233, and 237–238 each bind L-ornithine; that span reads SM. Residues 275 to 276 and R320 contribute to the carbamoyl phosphate site; that span reads CL.

This sequence belongs to the aspartate/ornithine carbamoyltransferase superfamily. OTCase family.

It localises to the cytoplasm. The catalysed reaction is carbamoyl phosphate + L-ornithine = L-citrulline + phosphate + H(+). It participates in amino-acid biosynthesis; L-arginine biosynthesis; L-arginine from L-ornithine and carbamoyl phosphate: step 1/3. Its function is as follows. Reversibly catalyzes the transfer of the carbamoyl group from carbamoyl phosphate (CP) to the N(epsilon) atom of ornithine (ORN) to produce L-citrulline. The chain is Ornithine carbamoyltransferase from Vibrio parahaemolyticus serotype O3:K6 (strain RIMD 2210633).